Reading from the N-terminus, the 130-residue chain is Large ribosomal subunit protein bL19 (130 aa).

It belongs to the bacterial ribosomal protein bL19 family.

Functionally, this protein is located at the 30S-50S ribosomal subunit interface and may play a role in the structure and function of the aminoacyl-tRNA binding site. The polypeptide is Large ribosomal subunit protein bL19 (Mycoplasma capricolum subsp. capricolum (strain California kid / ATCC 27343 / NCTC 10154)).